A 631-amino-acid polypeptide reads, in one-letter code: Chaperone protein DnaK (631 aa).

Threonine 197 bears the Phosphothreonine; by autocatalysis mark. Residues 600–631 are disordered; it reads KKENPQAADAQQGNTANAGKKKDDDVIDAEVE.

It belongs to the heat shock protein 70 family.

In terms of biological role, acts as a chaperone. The sequence is that of Chaperone protein DnaK from Wolinella succinogenes (strain ATCC 29543 / DSM 1740 / CCUG 13145 / JCM 31913 / LMG 7466 / NCTC 11488 / FDC 602W) (Vibrio succinogenes).